A 2108-amino-acid chain; its full sequence is Mucin-5B (2108 aa).

A signal peptide spans 1–21 (MEIKKERSFWIFCLIWSFCKG). Residues 36–203 (SECTTWGNFH…KVEDPSEKCP (168 aa)) enclose the VWFD 1 domain. 2 cysteine pairs are disulfide-bonded: Cys-38–Cys-166 and Cys-60–Cys-202. The interval 196-219 (EDPSEKCPDVRPDDHTGRHPTEDD) is disordered. A TIL 1 domain is found at 304–360 (CPSNMEYMECGNSCADTCADPERSKICKAPCTDGCFCPPGTILDDLGGKKCVPRDSC). Asn-381 carries N-linked (GlcNAc...) (complex) asparagine glycosylation. A VWFD 2 domain is found at 398–570 (GSCSIDGGFH…NSWKTRASCF (173 aa)). 3 disulfide bridges follow: Cys-400–Cys-534, Cys-422–Cys-569, and Cys-443–Cys-451. N-linked (GlcNAc...) (complex) asparagine glycosylation is found at Asn-528, Asn-599, Asn-680, and Asn-772. One can recognise a TIL 2 domain in the interval 666–723 (CPETMVYNYSVKYCNQSCRSLDEPDPLCKVQIAPMEGCGCPEGTYLNDEEECVTPDDC). One can recognise a TIL 3 domain in the interval 782–825 (GSECQKSCKTQDMHCYVTECVSGCMCPDGLVLDGSGGCIPKDQC). A VWFC 1 domain is found at 825–897 (CPCVHGGHFY…DYILAQDFCP (73 aa)). N-linked (GlcNAc...) (complex) asparagine glycosylation occurs at Asn-855. One can recognise a VWFD 3 domain in the interval 863–1033 (GTCTVYGNGH…NSWKITSTCS (171 aa)). Disulfide bonds link Cys-865–Cys-997, Cys-887–Cys-1032, Cys-896–Cys-994, and Cys-914–Cys-921. N-linked (GlcNAc...) (complex) asparagine glycans are attached at residues Asn-1036, Asn-1219, Asn-1371, and Asn-1452. Positions 1429 to 1613 (CICSGWGNEH…APVSTNRYCN (185 aa)) constitute a VWFD 4 domain. Cystine bridges form between Cys-1431-Cys-1573, Cys-1453-Cys-1612, and Cys-1477-Cys-1485. N-linked (GlcNAc...) (complex) asparagine glycosylation is found at Asn-1567, Asn-1639, Asn-1792, Asn-1807, and Asn-1841. In terms of domain architecture, VWFC 2 spans 1761–1832 (CGCTAQDGSV…DPCCTETVCE (72 aa)). The VWFC 3 domain maps to 1870–1937 (GVCVSEGVEF…KEGQCCSQCQ (68 aa)). The N-linked (GlcNAc...) (complex) asparagine glycan is linked to Asn-1964. Cystine bridges form between Cys-2010/Cys-2066, Cys-2031/Cys-2080, Cys-2042/Cys-2096, and Cys-2046/Cys-2098. A CTCK domain is found at 2010-2104 (CIDLPHKCKR…ECGCVETKCP (95 aa)).

Homomultimer; disulfide-linked. The N- and C-terminus mediate their assembly into higher order structures to form filaments. The CTCK domains of two polypeptides associate in the endoplasmic reticulum to generate intermolecularly disulfide-bonded dimers. These dimers progress to the Golgi apparatus, which is a more acidic environment than the endoplasmic reticulum. Under acidic conditions, the N-termini form non-covalent intermolecular interactions that juxtapose assemblies from different CTCK-linked dimers to produce long, disulfide-linked polymers that remain highly compact until secretion. In terms of processing, N-glycosylated. Complex glycosylation with bisecting N-acetylglucosamine. Contains mainly N-acetylglucosamine (3.1-8.5%), mannose (2.9-4.6%), a small amount of galactose (1.1-4.35) and sialic acid (0.3-1.3%). Most abundant glycan is composed of a GlcNAc(2)Man(3) core, a bisecting GlcNAc and another 3 GlcNAc antannae located on the mannoses of the core. Site Asn-1639 exists both in glycosylated and non-glycosylated forms.

It is found in the secreted. In terms of biological role, ovomucin, the glycoprotein responsible for the gel properties of egg white, is composed for 2 subunits, alpha-ovomucin/MUC5B and beta-ovomucin/MUC6. The polypeptide is Mucin-5B (MUC5B) (Gallus gallus (Chicken)).